The primary structure comprises 223 residues: Deoxyribose-phosphate aldolase (223 aa).

Aspartate 92 functions as the Proton donor/acceptor in the catalytic mechanism. Lysine 158 acts as the Schiff-base intermediate with acetaldehyde in catalysis. Lysine 188 (proton donor/acceptor) is an active-site residue.

Belongs to the DeoC/FbaB aldolase family. DeoC type 1 subfamily.

Its subcellular location is the cytoplasm. The catalysed reaction is 2-deoxy-D-ribose 5-phosphate = D-glyceraldehyde 3-phosphate + acetaldehyde. The protein operates within carbohydrate degradation; 2-deoxy-D-ribose 1-phosphate degradation; D-glyceraldehyde 3-phosphate and acetaldehyde from 2-deoxy-alpha-D-ribose 1-phosphate: step 2/2. Functionally, catalyzes a reversible aldol reaction between acetaldehyde and D-glyceraldehyde 3-phosphate to generate 2-deoxy-D-ribose 5-phosphate. The protein is Deoxyribose-phosphate aldolase of Mycolicibacterium paratuberculosis (strain ATCC BAA-968 / K-10) (Mycobacterium paratuberculosis).